The sequence spans 1060 residues: Carbamoyl phosphate synthase large chain (1060 aa).

The tract at residues 1–401 (MPKRTDIKKI…SLLKAVRSLE (401 aa)) is carboxyphosphate synthetic domain. The ATP site is built by R129, R169, G175, G176, K208, I210, E215, G241, I242, H243, Q284, and E298. The 195-residue stretch at 133–327 (KQLMEELEQP…IAKLAAKIAV (195 aa)) folds into the ATP-grasp 1 domain. Residues Q284, E298, and N300 each coordinate Mg(2+). 3 residues coordinate Mn(2+): Q284, E298, and N300. Residues 402-546 (IGAYHNELAE…YSTYEVENES (145 aa)) are oligomerization domain. The segment at 547–929 (NVSKKPSVLV…ALYKAFEASG (383 aa)) is carbamoyl phosphate synthetic domain. Positions 671 to 861 (EQALQELAIP…MAQVATKAIL (191 aa)) constitute an ATP-grasp 2 domain. The ATP site is built by R707, S746, L748, E752, G777, V778, H779, S780, Q820, and E832. Positions 820, 832, and 834 each coordinate Mg(2+). The Mn(2+) site is built by Q820, E832, and N834. One can recognise an MGS-like domain in the interval 930–1060 (LHLPSYGAVL…ESRAFTTEAI (131 aa)). Residues 930–1060 (LHLPSYGAVL…ESRAFTTEAI (131 aa)) are allosteric domain.

It belongs to the CarB family. As to quaternary structure, composed of two chains; the small (or glutamine) chain promotes the hydrolysis of glutamine to ammonia, which is used by the large (or ammonia) chain to synthesize carbamoyl phosphate. Tetramer of heterodimers (alpha,beta)4. Mg(2+) serves as cofactor. It depends on Mn(2+) as a cofactor.

It catalyses the reaction hydrogencarbonate + L-glutamine + 2 ATP + H2O = carbamoyl phosphate + L-glutamate + 2 ADP + phosphate + 2 H(+). The catalysed reaction is hydrogencarbonate + NH4(+) + 2 ATP = carbamoyl phosphate + 2 ADP + phosphate + 2 H(+). It functions in the pathway amino-acid biosynthesis; L-arginine biosynthesis; carbamoyl phosphate from bicarbonate: step 1/1. The protein operates within pyrimidine metabolism; UMP biosynthesis via de novo pathway; (S)-dihydroorotate from bicarbonate: step 1/3. Large subunit of the glutamine-dependent carbamoyl phosphate synthetase (CPSase). CPSase catalyzes the formation of carbamoyl phosphate from the ammonia moiety of glutamine, carbonate, and phosphate donated by ATP, constituting the first step of 2 biosynthetic pathways, one leading to arginine and/or urea and the other to pyrimidine nucleotides. The large subunit (synthetase) binds the substrates ammonia (free or transferred from glutamine from the small subunit), hydrogencarbonate and ATP and carries out an ATP-coupled ligase reaction, activating hydrogencarbonate by forming carboxy phosphate which reacts with ammonia to form carbamoyl phosphate. The chain is Carbamoyl phosphate synthase large chain from Enterococcus faecalis (strain ATCC 700802 / V583).